A 218-amino-acid polypeptide reads, in one-letter code: Thiopurine S-methyltransferase (218 aa).

Residues Trp-10, Leu-45, Glu-66, and Arg-123 each contribute to the S-adenosyl-L-methionine site.

This sequence belongs to the class I-like SAM-binding methyltransferase superfamily. TPMT family.

The protein resides in the cytoplasm. It catalyses the reaction S-adenosyl-L-methionine + a thiopurine = S-adenosyl-L-homocysteine + a thiopurine S-methylether.. The polypeptide is Thiopurine S-methyltransferase (Pseudomonas fluorescens (strain SBW25)).